The sequence spans 298 residues: 4-hydroxy-tetrahydrodipicolinate synthase (298 aa).

Thr48 is a binding site for pyruvate. Residue Tyr137 is the Proton donor/acceptor of the active site. The Schiff-base intermediate with substrate role is filled by Lys166. Ile207 provides a ligand contact to pyruvate.

This sequence belongs to the DapA family. Homotetramer; dimer of dimers.

Its subcellular location is the cytoplasm. It catalyses the reaction L-aspartate 4-semialdehyde + pyruvate = (2S,4S)-4-hydroxy-2,3,4,5-tetrahydrodipicolinate + H2O + H(+). It functions in the pathway amino-acid biosynthesis; L-lysine biosynthesis via DAP pathway; (S)-tetrahydrodipicolinate from L-aspartate: step 3/4. In terms of biological role, catalyzes the condensation of (S)-aspartate-beta-semialdehyde [(S)-ASA] and pyruvate to 4-hydroxy-tetrahydrodipicolinate (HTPA). This chain is 4-hydroxy-tetrahydrodipicolinate synthase, found in Campylobacter hominis (strain ATCC BAA-381 / DSM 21671 / CCUG 45161 / LMG 19568 / NCTC 13146 / CH001A).